The following is a 320-amino-acid chain: Holliday junction branch migration complex subunit RuvB (320 aa).

Residues 1–172 (MTANVCLDES…FGIISRLEYY (172 aa)) are large ATPase domain (RuvB-L). Residues Arg12, Gly53, Lys56, Thr57, Thr58, 119–121 (EDF), Arg162, Tyr172, and Arg209 each bind ATP. Thr57 serves as a coordination point for Mg(2+). The tract at residues 173–243 (TPADLARIVA…LASEALGRME (71 aa)) is small ATPAse domain (RuvB-S). A head domain (RuvB-H) region spans residues 246–320 (ESGLDQMDRK…KAYRHLNLLG (75 aa)). Residues Arg301 and Arg306 each coordinate DNA.

It belongs to the RuvB family. As to quaternary structure, homohexamer. Forms an RuvA(8)-RuvB(12)-Holliday junction (HJ) complex. HJ DNA is sandwiched between 2 RuvA tetramers; dsDNA enters through RuvA and exits via RuvB. An RuvB hexamer assembles on each DNA strand where it exits the tetramer. Each RuvB hexamer is contacted by two RuvA subunits (via domain III) on 2 adjacent RuvB subunits; this complex drives branch migration. In the full resolvosome a probable DNA-RuvA(4)-RuvB(12)-RuvC(2) complex forms which resolves the HJ.

The protein resides in the cytoplasm. The catalysed reaction is ATP + H2O = ADP + phosphate + H(+). The RuvA-RuvB-RuvC complex processes Holliday junction (HJ) DNA during genetic recombination and DNA repair, while the RuvA-RuvB complex plays an important role in the rescue of blocked DNA replication forks via replication fork reversal (RFR). RuvA specifically binds to HJ cruciform DNA, conferring on it an open structure. The RuvB hexamer acts as an ATP-dependent pump, pulling dsDNA into and through the RuvAB complex. RuvB forms 2 homohexamers on either side of HJ DNA bound by 1 or 2 RuvA tetramers; 4 subunits per hexamer contact DNA at a time. Coordinated motions by a converter formed by DNA-disengaged RuvB subunits stimulates ATP hydrolysis and nucleotide exchange. Immobilization of the converter enables RuvB to convert the ATP-contained energy into a lever motion, pulling 2 nucleotides of DNA out of the RuvA tetramer per ATP hydrolyzed, thus driving DNA branch migration. The RuvB motors rotate together with the DNA substrate, which together with the progressing nucleotide cycle form the mechanistic basis for DNA recombination by continuous HJ branch migration. Branch migration allows RuvC to scan DNA until it finds its consensus sequence, where it cleaves and resolves cruciform DNA. The sequence is that of Holliday junction branch migration complex subunit RuvB from Nitratidesulfovibrio vulgaris (strain ATCC 29579 / DSM 644 / CCUG 34227 / NCIMB 8303 / VKM B-1760 / Hildenborough) (Desulfovibrio vulgaris).